Reading from the N-terminus, the 176-residue chain is Transmembrane protein 238 (176 aa).

The disordered stretch occupies residues 1–21; that stretch reads MAAASPVCGSQASAVGASSPP. Over 1-36 the chain is Cytoplasmic; sequence MAAASPVCGSQASAVGASSPPAPAPAPAAGLGRCRM. Residues 9-19 show a composition bias toward low complexity; the sequence is GSQASAVGASS. The helical transmembrane segment at 37–57 threads the bilayer; sequence ALLLAVALDVAGMAALLTGVF. The Extracellular segment spans residues 58-69; sequence AQLQVRGRDFGD. A helical membrane pass occupies residues 70–90; sequence LLIYSGALLVFLSLLGWILWY. The Cytoplasmic portion of the chain corresponds to 91 to 176; it reads TGNIEISRQE…GSVAAGTGSE (86 aa). Positions 124 to 135 are enriched in low complexity; the sequence is SAPATASPRTTA. The segment at 124 to 156 is disordered; the sequence is SAPATASPRTTAGLRSARRANRAPQPSSSGSRR. At serine 175 the chain carries Phosphoserine.

It localises to the membrane. The sequence is that of Transmembrane protein 238 (Tmem238) from Mus musculus (Mouse).